The sequence spans 481 residues: 3-isopropylmalate dehydratase large subunit (481 aa).

[4Fe-4S] cluster contacts are provided by Cys-363, Cys-423, and Cys-426. The tract at residues 432 to 459 (DQLKPGERSASTSNRNFEGRQGPGGRTH) is disordered.

The protein belongs to the aconitase/IPM isomerase family. LeuC type 1 subfamily. As to quaternary structure, heterodimer of LeuC and LeuD. Requires [4Fe-4S] cluster as cofactor.

It carries out the reaction (2R,3S)-3-isopropylmalate = (2S)-2-isopropylmalate. The protein operates within amino-acid biosynthesis; L-leucine biosynthesis; L-leucine from 3-methyl-2-oxobutanoate: step 2/4. Functionally, catalyzes the isomerization between 2-isopropylmalate and 3-isopropylmalate, via the formation of 2-isopropylmaleate. The protein is 3-isopropylmalate dehydratase large subunit of Corynebacterium glutamicum (strain R).